The following is a 410-amino-acid chain: Histidine--tRNA ligase (410 aa).

Belongs to the class-II aminoacyl-tRNA synthetase family.

The protein resides in the cytoplasm. The enzyme catalyses tRNA(His) + L-histidine + ATP = L-histidyl-tRNA(His) + AMP + diphosphate + H(+). In Methanoculleus marisnigri (strain ATCC 35101 / DSM 1498 / JR1), this protein is Histidine--tRNA ligase.